Consider the following 154-residue polypeptide: 6,7-dimethyl-8-ribityllumazine synthase (154 aa).

5-amino-6-(D-ribitylamino)uracil-binding positions include phenylalanine 23, 57 to 59 (AYE), and 81 to 83 (AVI). (2S)-2-hydroxy-3-oxobutyl phosphate is bound at residue 86–87 (GT). Histidine 89 functions as the Proton donor in the catalytic mechanism. Phenylalanine 114 provides a ligand contact to 5-amino-6-(D-ribitylamino)uracil. Arginine 128 is a binding site for (2S)-2-hydroxy-3-oxobutyl phosphate.

It belongs to the DMRL synthase family. In terms of assembly, forms an icosahedral capsid composed of 60 subunits, arranged as a dodecamer of pentamers.

The enzyme catalyses (2S)-2-hydroxy-3-oxobutyl phosphate + 5-amino-6-(D-ribitylamino)uracil = 6,7-dimethyl-8-(1-D-ribityl)lumazine + phosphate + 2 H2O + H(+). It functions in the pathway cofactor biosynthesis; riboflavin biosynthesis; riboflavin from 2-hydroxy-3-oxobutyl phosphate and 5-amino-6-(D-ribitylamino)uracil: step 1/2. Catalyzes the formation of 6,7-dimethyl-8-ribityllumazine by condensation of 5-amino-6-(D-ribitylamino)uracil with 3,4-dihydroxy-2-butanone 4-phosphate. This is the penultimate step in the biosynthesis of riboflavin. This chain is 6,7-dimethyl-8-ribityllumazine synthase, found in Acidithiobacillus ferrooxidans (strain ATCC 23270 / DSM 14882 / CIP 104768 / NCIMB 8455) (Ferrobacillus ferrooxidans (strain ATCC 23270)).